We begin with the raw amino-acid sequence, 84 residues long: Subtilisin-chymotrypsin inhibitor-2A (84 aa).

Positions 1–23 (MSSVEKKPEGVNTGAGDRHNLKT) are disordered.

Belongs to the protease inhibitor I13 (potato type I serine protease inhibitor) family.

In terms of biological role, inhibits both subtilisin and chymotrypsin. The polypeptide is Subtilisin-chymotrypsin inhibitor-2A (Hordeum vulgare (Barley)).